Reading from the N-terminus, the 565-residue chain is Tetratricopeptide repeat protein 39A (565 aa).

TPR repeat units lie at residues 271–304 (AIFL…QQVW), 461–494 (CLIQ…EKKL), and 502–535 (PNAL…YKVY).

Belongs to the TTC39 family.

The chain is Tetratricopeptide repeat protein 39A (ttc39a) from Danio rerio (Zebrafish).